A 115-amino-acid chain; its full sequence is Putative membrane protein insertion efficiency factor (115 aa).

This sequence belongs to the UPF0161 family.

It localises to the cell membrane. Its function is as follows. Could be involved in insertion of integral membrane proteins into the membrane. The chain is Putative membrane protein insertion efficiency factor from Mycolicibacterium paratuberculosis (strain ATCC BAA-968 / K-10) (Mycobacterium paratuberculosis).